We begin with the raw amino-acid sequence, 362 residues long: 3-isopropylmalate dehydrogenase (362 aa).

Position 78-91 (78-91 (GPKWEHLAPNDQPE)) interacts with NAD(+). Substrate-binding residues include R99, R109, R138, and D227. Mg(2+) contacts are provided by D227, D251, and D255. Position 285-297 (285-297 (GSAPDIAGKNIAN)) interacts with NAD(+).

This sequence belongs to the isocitrate and isopropylmalate dehydrogenases family. LeuB type 1 subfamily. Homodimer. It depends on Mg(2+) as a cofactor. The cofactor is Mn(2+).

It localises to the cytoplasm. It catalyses the reaction (2R,3S)-3-isopropylmalate + NAD(+) = 4-methyl-2-oxopentanoate + CO2 + NADH. The protein operates within amino-acid biosynthesis; L-leucine biosynthesis; L-leucine from 3-methyl-2-oxobutanoate: step 3/4. Its function is as follows. Catalyzes the oxidation of 3-carboxy-2-hydroxy-4-methylpentanoate (3-isopropylmalate) to 3-carboxy-4-methyl-2-oxopentanoate. The product decarboxylates to 4-methyl-2 oxopentanoate. This chain is 3-isopropylmalate dehydrogenase, found in Photobacterium profundum (strain SS9).